Here is a 479-residue protein sequence, read N- to C-terminus: MNLPQNIRYRRYQDWTEEEIKSIKTNVALSPWHTTYHIEPKTGLLNDPNGFSYFNGKFNLFYQNWPFGAAHGLKSWIHTESEDLVHFKETGTVLYPDTSHDSHGAYSGSAYEIGDQLFLFYTGNVRDENWVRHPLQIGAFMDKKGNIQKFTDVLIKQPNDVTEHFRDPQIFNYKGQFYAIVGAQSLDKKGFIKLYKAVDNDIKNWQEVGNLDFGGSKSEYMIECPNLVFINEQPVLIYSPQGLSKSELDYHNIYPNTYKVCQSFDTEKPALVDASEIQNLDFGFECYATQAFNAPDGRVYAVSWIGLPDIDYPSDSYDYQGALSLVKELSLKHGKLYQYPVEAVRSLRSEKEAVTYKPETNNTYELELTFDSSSVNELLLFADNKGNGLAITVDTKMGTILIDRSKAGEQYALEFGSQRSCSIQAKETVVNIFVDKSIFEIFINKGEKVFTGRVFPNDKQTGIVIKSGKPSGNYYELKY.

Substrate-binding positions include Leu44–Asp47, Gln63, Tyr106–Ser107, Arg166–Asp167, and Glu223. Residue Asp47 is part of the active site.

The protein belongs to the glycosyl hydrolase 32 family.

It localises to the cytoplasm. It catalyses the reaction Hydrolysis of terminal non-reducing beta-D-fructofuranoside residues in beta-D-fructofuranosides.. Its pathway is glycan biosynthesis; sucrose metabolism. This is Sucrose-6-phosphate hydrolase (scrB) from Streptococcus mutans serotype c (strain ATCC 700610 / UA159).